The sequence spans 127 residues: Calcitonin receptor-stimulating peptide 2 (127 aa).

The signal sequence occupies residues 1 to 25; sequence MGFWKLSPFLAIGLLVMYQAGILQA. Positions 26 to 81 are excised as a propeptide; that stretch reads APFRSALENPLESATLTEDEICVLLTAVVKDYVQMKARELQQEQETEGSSLTAQKS. Positions 65-85 are disordered; that stretch reads LQQEQETEGSSLTAQKSSCKD. The segment covering 72 to 81 has biased composition (polar residues); that stretch reads EGSSLTAQKS. C83 and C88 are joined by a disulfide.

The protein belongs to the calcitonin family.

It is found in the secreted. The polypeptide is Calcitonin receptor-stimulating peptide 2 (CRSP2) (Canis lupus familiaris (Dog)).